The sequence spans 345 residues: AP2-like ethylene-responsive transcription factor At1g16060 (345 aa).

The segment at 15–62 (TRQSKKTSVENETGDDQSATSVVLKAKRKRRSQPRDAPPQRSSVHRGV) is disordered. 2 consecutive DNA-binding regions (AP2/ERF) follow at residues 58–124 (VHRG…LNFP) and 160–218 (KYRG…TNFD). The tract at residues 243–302 (HSDLSPFIKPNHESDLSQSQSSSEDNDDRKTKLLKSSPLVAEEVIGPSTPPEIAPPRRSF) is disordered.

Belongs to the AP2/ERF transcription factor family. AP2 subfamily.

It localises to the nucleus. Its function is as follows. Probably acts as a transcriptional activator. Binds to the GCC-box pathogenesis-related promoter element. May be involved in the regulation of gene expression by stress factors and by components of stress signal transduction pathways. This is AP2-like ethylene-responsive transcription factor At1g16060 from Arabidopsis thaliana (Mouse-ear cress).